The following is a 372-amino-acid chain: Alanine dehydrogenase 2 (372 aa).

Histidine 95 is a catalytic residue. 169 to 199 provides a ligand contact to NAD(+); that stretch reads KVTIIGGGQAGTNAAKIALGLGADVTILDVN.

It belongs to the AlaDH/PNT family.

The enzyme catalyses L-alanine + NAD(+) + H2O = pyruvate + NH4(+) + NADH + H(+). It functions in the pathway amino-acid degradation; L-alanine degradation via dehydrogenase pathway; NH(3) and pyruvate from L-alanine: step 1/1. In terms of biological role, may play a role in cell wall synthesis as L-alanine is an important constituent of the peptidoglycan layer. In Staphylococcus aureus (strain MRSA252), this protein is Alanine dehydrogenase 2 (ald2).